A 362-amino-acid polypeptide reads, in one-letter code: Peptide chain release factor 1 (362 aa).

N5-methylglutamine is present on Q237.

The protein belongs to the prokaryotic/mitochondrial release factor family. In terms of processing, methylated by PrmC. Methylation increases the termination efficiency of RF1.

It is found in the cytoplasm. In terms of biological role, peptide chain release factor 1 directs the termination of translation in response to the peptide chain termination codons UAG and UAA. The chain is Peptide chain release factor 1 from Vibrio campbellii (strain ATCC BAA-1116).